An 806-amino-acid polypeptide reads, in one-letter code: Lon protease 1 (806 aa).

Residues 31 to 235 form the Lon N-terminal domain; that stretch reads VPLIAVPSHP…KVLELIYEEL (205 aa). 389 to 396 contributes to the ATP binding site; that stretch reads GPPGVGKT. The Lon proteolytic domain maps to 626–806; sequence AMYSGMVMGL…NMREVIKLLF (181 aa). Residues Ser714 and Lys757 contribute to the active site.

This sequence belongs to the peptidase S16 family. Homohexamer. Organized in a ring with a central cavity.

The protein localises to the cytoplasm. It carries out the reaction Hydrolysis of proteins in presence of ATP.. Functionally, ATP-dependent serine protease that mediates the selective degradation of mutant and abnormal proteins as well as certain short-lived regulatory proteins. Required for cellular homeostasis and for survival from DNA damage and developmental changes induced by stress. Degrades polypeptides processively to yield small peptide fragments that are 5 to 10 amino acids long. Binds to DNA in a double-stranded, site-specific manner. This is Lon protease 1 from Borreliella burgdorferi (strain ATCC 35210 / DSM 4680 / CIP 102532 / B31) (Borrelia burgdorferi).